The sequence spans 181 residues: Major urinary protein 11 (181 aa).

A signal peptide spans 1–19 (MKMLLLLLCLGLTLVCVHA). The cysteines at positions 83 and 176 are disulfide-linked.

Belongs to the calycin superfamily. Lipocalin family.

It localises to the secreted. Major urinary proteins (Mups) bind pheromones, and thus stabilize them to allow slow release into the air from urine marks. May protect pheromones from oxidation. May also act as pheromones themselves. In this context, they play a role in the regulation of social behaviors, such as aggression, mating, pup-suckling, territory establishment and dominance. Binds the pheromone analog 2-sec-butyl-4,5-dihydrothiazole (SBT) in vitro. The protein is Major urinary protein 11 of Mus musculus (Mouse).